Reading from the N-terminus, the 280-residue chain is Energy-coupling factor transporter ATP-binding protein EcfA (280 aa).

An ABC transporter domain is found at 5-240 (IDVKNLTYKY…DEMLKLTGLE (236 aa)). 40–47 (GHNGSGKS) is a binding site for ATP.

The protein belongs to the ABC transporter superfamily. Energy-coupling factor EcfA family. As to quaternary structure, forms a stable energy-coupling factor (ECF) transporter complex composed of 2 membrane-embedded substrate-binding proteins (S component), 2 ATP-binding proteins (A component) and 2 transmembrane proteins (T component).

The protein resides in the cell membrane. Its function is as follows. ATP-binding (A) component of a common energy-coupling factor (ECF) ABC-transporter complex. Unlike classic ABC transporters this ECF transporter provides the energy necessary to transport a number of different substrates. This is Energy-coupling factor transporter ATP-binding protein EcfA from Pediococcus pentosaceus (strain ATCC 25745 / CCUG 21536 / LMG 10740 / 183-1w).